Consider the following 448-residue polypeptide: Chromosomal replication initiator protein DnaA (448 aa).

The interval 1–73 (MNTHLTETWE…VNALKLLTSK (73 aa)) is domain I, interacts with DnaA modulators. The domain II stretch occupies residues 73-109 (KKYNIDFIVTTEEKIEENQKNHNNEKSNIVVNDEMST). The domain III, AAA+ region stretch occupies residues 110–326 (MLNPKYTFDS…GALIRIVAFS (217 aa)). The ATP site is built by G154, G156, K157, and T158. The segment at 327–448 (SLTNKEISID…KELNKRINQK (122 aa)) is domain IV, binds dsDNA.

The protein belongs to the DnaA family. As to quaternary structure, oligomerizes as a right-handed, spiral filament on DNA at oriC.

The protein resides in the cytoplasm. Functionally, plays an essential role in the initiation and regulation of chromosomal replication. ATP-DnaA binds to the origin of replication (oriC) to initiate formation of the DNA replication initiation complex once per cell cycle. Binds the DnaA box (a 9 base pair repeat at the origin) and separates the double-stranded (ds)DNA. Forms a right-handed helical filament on oriC DNA; dsDNA binds to the exterior of the filament while single-stranded (ss)DNA is stabiized in the filament's interior. The ATP-DnaA-oriC complex binds and stabilizes one strand of the AT-rich DNA unwinding element (DUE), permitting loading of DNA polymerase. After initiation quickly degrades to an ADP-DnaA complex that is not apt for DNA replication. Binds acidic phospholipids. The chain is Chromosomal replication initiator protein DnaA from Clostridium botulinum (strain ATCC 19397 / Type A).